A 168-amino-acid polypeptide reads, in one-letter code: Endoribonuclease YbeY (168 aa).

3 residues coordinate Zn(2+): histidine 123, histidine 127, and histidine 133.

This sequence belongs to the endoribonuclease YbeY family. It depends on Zn(2+) as a cofactor.

The protein resides in the cytoplasm. Functionally, single strand-specific metallo-endoribonuclease involved in late-stage 70S ribosome quality control and in maturation of the 3' terminus of the 16S rRNA. The sequence is that of Endoribonuclease YbeY from Francisella tularensis subsp. holarctica (strain LVS).